Reading from the N-terminus, the 595-residue chain is Chaperone protein HscA homolog (595 aa).

It belongs to the heat shock protein 70 family.

In terms of biological role, chaperone involved in the maturation of iron-sulfur cluster-containing proteins. Has a low intrinsic ATPase activity which is markedly stimulated by HscB. The sequence is that of Chaperone protein HscA homolog from Rickettsia africae (strain ESF-5).